Reading from the N-terminus, the 385-residue chain is Acetate kinase (385 aa).

Residue asparagine 9 participates in Mg(2+) binding. Lysine 16 serves as a coordination point for ATP. A substrate-binding site is contributed by arginine 87. Catalysis depends on aspartate 144, which acts as the Proton donor/acceptor. ATP is bound by residues 202–206 (HLGSG) and 277–279 (DMR). Residue glutamate 373 participates in Mg(2+) binding.

This sequence belongs to the acetokinase family. In terms of assembly, homodimer. Requires Mg(2+) as cofactor. It depends on Mn(2+) as a cofactor.

Its subcellular location is the cytoplasm. It carries out the reaction acetate + ATP = acetyl phosphate + ADP. It functions in the pathway metabolic intermediate biosynthesis; acetyl-CoA biosynthesis; acetyl-CoA from acetate: step 1/2. Functionally, catalyzes the formation of acetyl phosphate from acetate and ATP. Can also catalyze the reverse reaction. This is Acetate kinase from Rickettsia typhi (strain ATCC VR-144 / Wilmington).